We begin with the raw amino-acid sequence, 66 residues long: Large ribosomal subunit protein bL31 (66 aa).

4 residues coordinate Zn(2+): cysteine 16, cysteine 18, cysteine 36, and cysteine 39.

This sequence belongs to the bacterial ribosomal protein bL31 family. Type A subfamily. As to quaternary structure, part of the 50S ribosomal subunit during exponential growth. Zn(2+) serves as cofactor.

Binds the 23S rRNA. In terms of biological role, while neither of the L31 paralogs is essential, this protein seems to function as the main L31 protein. Has a lower affinity for 70S ribosomes than the non-zinc-containing paralog L31B (ytiA); is displaced by it to varying extents, even under zinc-replete conditions. The protein is Large ribosomal subunit protein bL31 (rpmE) of Bacillus subtilis (strain 168).